Consider the following 357-residue polypeptide: Hydroxyproline O-arabinosyltransferase RDN1 (357 aa).

Residues 13-33 (LLMLLMVLGFSFATYNLVFMM) traverse the membrane as a helical; Signal-anchor segment.

As to expression, expressed in the vasculature of leaves, petioles, stems and roots. Expressed in the vascular cylinder throughout the root, and nodule vasculature.

It localises to the golgi apparatus membrane. It carries out the reaction trans-4-hydroxy-L-prolyl-[protein] + UDP-beta-L-arabinofuranose = O-(beta-L-arabinofuranosyl)-trans-4-hydroxy-L-prolyl-[protein] + UDP + H(+). Its function is as follows. Probable glycosyltransferase involved in the O-arabinosylation of several proteins including extensins and small signaling peptides. Catalyzes the transfer of the initial L-arabinose to the hydroxyl group of Hyp residues. Probably involved in the arabinosylation of CLE12, a signaling peptide that moves from root to shoot, to interact with SUNN receptor kinase signaling that regulates nodulation. Involved in long distance nodulation signaling events. Involved in the autoregulation of nodulation (AON), a long distance systemic signaling from root to shoot and back again, which allows legumes to limit the number of root nodules formed based on available nitrogen and previous rhizobial colonization. Functions in the root, upstream of the shoot receptor kinase SUNN and via CLE peptide, to control AON. The protein is Hydroxyproline O-arabinosyltransferase RDN1 of Medicago truncatula (Barrel medic).